The chain runs to 345 residues: UDP-3-O-acylglucosamine N-acyltransferase (345 aa).

The active-site Proton acceptor is His237.

Belongs to the transferase hexapeptide repeat family. LpxD subfamily. As to quaternary structure, homotrimer.

The catalysed reaction is a UDP-3-O-[(3R)-3-hydroxyacyl]-alpha-D-glucosamine + a (3R)-hydroxyacyl-[ACP] = a UDP-2-N,3-O-bis[(3R)-3-hydroxyacyl]-alpha-D-glucosamine + holo-[ACP] + H(+). It functions in the pathway bacterial outer membrane biogenesis; LPS lipid A biosynthesis. Functionally, catalyzes the N-acylation of UDP-3-O-acylglucosamine using 3-hydroxyacyl-ACP as the acyl donor. Is involved in the biosynthesis of lipid A, a phosphorylated glycolipid that anchors the lipopolysaccharide to the outer membrane of the cell. In Geobacter sp. (strain M21), this protein is UDP-3-O-acylglucosamine N-acyltransferase.